Consider the following 328-residue polypeptide: Mannitol-1-phosphate 5-dehydrogenase (328 aa).

Position 3–14 (3–14 (LIHFGAGNIGCG)) interacts with NAD(+).

The protein belongs to the mannitol dehydrogenase family.

It carries out the reaction D-mannitol 1-phosphate + NAD(+) = beta-D-fructose 6-phosphate + NADH + H(+). This is Mannitol-1-phosphate 5-dehydrogenase (mtlD) from Mycoplasma mycoides subsp. mycoides SC (strain CCUG 32753 / NCTC 10114 / PG1).